A 357-amino-acid polypeptide reads, in one-letter code: Alanine racemase (357 aa).

The active-site Proton acceptor; specific for D-alanine is K34. The residue at position 34 (K34) is an N6-(pyridoxal phosphate)lysine. R129 serves as a coordination point for substrate. Y254 acts as the Proton acceptor; specific for L-alanine in catalysis. Residue M302 participates in substrate binding.

It belongs to the alanine racemase family. It depends on pyridoxal 5'-phosphate as a cofactor.

It carries out the reaction L-alanine = D-alanine. The protein operates within amino-acid biosynthesis; D-alanine biosynthesis; D-alanine from L-alanine: step 1/1. In terms of biological role, catalyzes the interconversion of L-alanine and D-alanine. Likely plays an important role in supplying D-alanine, which is an indispensable constituent in the biosynthesis of bacterial cell-wall peptidoglycan. This Aeromonas hydrophila subsp. hydrophila (strain ATCC 7966 / DSM 30187 / BCRC 13018 / CCUG 14551 / JCM 1027 / KCTC 2358 / NCIMB 9240 / NCTC 8049) protein is Alanine racemase.